A 277-amino-acid chain; its full sequence is Large ribosomal subunit protein uL2c (277 aa).

Disordered regions lie at residues 24-57 and 226-266; these read IVQSKPEKQLTSGQHRKKGRNNRGVITSRHRGGG and NAAD…HKYS.

Belongs to the universal ribosomal protein uL2 family. As to quaternary structure, part of the 50S ribosomal subunit.

The protein resides in the plastid. Its subcellular location is the chloroplast. This Zygnema circumcarinatum (Green alga) protein is Large ribosomal subunit protein uL2c (rpl2).